The chain runs to 186 residues: Dynactin subunit 3 (186 aa).

A2 is subject to N-acetylalanine. A coiled-coil region spans residues 46 to 66 (NIASKRERVKILYKKIEDLIK).

This sequence belongs to the dynactin subunit 3 family. As to quaternary structure, subunit of dynactin, a multiprotein complex part of a tripartite complex with dynein and a adapter, such as BICDL1, BICD2 or HOOK3. The dynactin complex is built around ACTR1A/ACTB filament and consists of an actin-related filament composed of a shoulder domain, a pointed end and a barbed end. Its length is defined by its flexible shoulder domain. The soulder is composed of 2 DCTN1 subunits, 4 DCTN2 and 2 DCTN3. The 4 DCNT2 (via N-terminus) bind the ACTR1A filament and act as molecular rulers to determine the length. The pointed end is important for binding dynein-dynactin cargo adapters. Consists of 4 subunits: ACTR10, DCNT4, DCTN5 and DCTN6. The barbed end is composed of a CAPZA1:CAPZB heterodimers, which binds ACTR1A/ACTB filament and dynactin and stabilizes dynactin.

The protein localises to the cytoplasm. It is found in the cytoskeleton. It localises to the microtubule organizing center. Its subcellular location is the centrosome. The protein resides in the chromosome. The protein localises to the centromere. It is found in the kinetochore. It localises to the spindle. Its subcellular location is the cleavage furrow. The protein resides in the midbody. Its function is as follows. Part of the dynactin complex that activates the molecular motor dynein for ultra-processive transport along microtubules. Together with dynein may be involved in spindle assembly and cytokinesis. In Mus musculus (Mouse), this protein is Dynactin subunit 3.